A 552-amino-acid chain; its full sequence is Probable acyl-activating enzyme 5, peroxisomal (552 aa).

A Microbody targeting signal motif is present at residues 550–552 (SRM).

This sequence belongs to the ATP-dependent AMP-binding enzyme family. Expressed in roots, stems and developing seeds.

It is found in the peroxisome. In terms of biological role, may act as an acid--thiol ligase that activates carboxylic acids by forming acyl-CoAs. This Arabidopsis thaliana (Mouse-ear cress) protein is Probable acyl-activating enzyme 5, peroxisomal (AAE5).